A 323-amino-acid polypeptide reads, in one-letter code: Fructose-1,6-bisphosphatase class 1 (323 aa).

Mg(2+) is bound by residues Glu88, Asp107, Leu109, and Asp110. Substrate-binding positions include 110–113 (DGSS) and Asn200. Glu272 contributes to the Mg(2+) binding site.

This sequence belongs to the FBPase class 1 family. In terms of assembly, homotetramer. Mg(2+) serves as cofactor.

The protein localises to the cytoplasm. It catalyses the reaction beta-D-fructose 1,6-bisphosphate + H2O = beta-D-fructose 6-phosphate + phosphate. The protein operates within carbohydrate biosynthesis; gluconeogenesis. This chain is Fructose-1,6-bisphosphatase class 1, found in Acinetobacter baumannii (strain AYE).